The following is a 284-amino-acid chain: 4-diphosphocytidyl-2-C-methyl-D-erythritol kinase (284 aa).

K14 is an active-site residue. 98-108 is a binding site for ATP; that stretch reads PMGGGLGGGSS. The active site involves D140.

It belongs to the GHMP kinase family. IspE subfamily.

The catalysed reaction is 4-CDP-2-C-methyl-D-erythritol + ATP = 4-CDP-2-C-methyl-D-erythritol 2-phosphate + ADP + H(+). It participates in isoprenoid biosynthesis; isopentenyl diphosphate biosynthesis via DXP pathway; isopentenyl diphosphate from 1-deoxy-D-xylulose 5-phosphate: step 3/6. In terms of biological role, catalyzes the phosphorylation of the position 2 hydroxy group of 4-diphosphocytidyl-2C-methyl-D-erythritol. This Shewanella denitrificans (strain OS217 / ATCC BAA-1090 / DSM 15013) protein is 4-diphosphocytidyl-2-C-methyl-D-erythritol kinase.